Reading from the N-terminus, the 477-residue chain is PTS system glucose-specific EIICB component (477 aa).

One can recognise a PTS EIIC type-1 domain in the interval Met1–Asn388. 10 consecutive transmembrane segments (helical) span residues Ser15–Ala35, Thr51–Phe71, Gly76–Val96, His112–Phe132, Phe152–Trp172, Pro191–His211, Leu250–His270, Ile280–Ile300, Phe304–Pro324, and Phe357–Ile377. One can recognise a PTS EIIB type-1 domain in the interval Asn399–Ile477. Cys421 acts as the Phosphocysteine intermediate; for EIIB activity in catalysis. Position 421 is a phosphocysteine (Cys421).

It localises to the cell inner membrane. The enzyme catalyses N(pros)-phospho-L-histidyl-[protein] + D-glucose(out) = D-glucose 6-phosphate(in) + L-histidyl-[protein]. Functionally, the phosphoenolpyruvate-dependent sugar phosphotransferase system (sugar PTS), a major carbohydrate active transport system, catalyzes the phosphorylation of incoming sugar substrates concomitantly with their translocation across the cell membrane. The enzyme II complex composed of PtsG and Crr is involved in glucose transport. The chain is PTS system glucose-specific EIICB component (ptsG) from Buchnera aphidicola subsp. Acyrthosiphon pisum (strain APS) (Acyrthosiphon pisum symbiotic bacterium).